We begin with the raw amino-acid sequence, 416 residues long: cAMP-dependent protein kinase type II-beta regulatory subunit (416 aa).

The interval 2-151 (SIEIPAGLTE…RLQEACKDIL (150 aa)) is dimerization and phosphorylation. The interval 53-97 (HEGRTWGDAGAAAGGGTPSKGVNFAEEPMRSDSENGEEEEAAEAG) is disordered. The residue at position 69 (Thr69) is a Phosphothreonine. Residues Ser83, Ser85, and Ser112 each carry the phosphoserine modification. 3',5'-cyclic AMP contacts are provided by residues 152-273 (LFKN…ESLP), Glu221, Arg230, 274-416 (FLKS…EPTA), Glu350, and Arg359.

This sequence belongs to the cAMP-dependent kinase regulatory chain family. In terms of assembly, the inactive form of the enzyme is composed of two regulatory chains and two catalytic chains. Activation by cAMP produces two active catalytic monomers and a regulatory dimer that binds four cAMP molecules. Interacts with PRKACA and PRKACB. Interacts with the phosphorylated form of PJA2. Forms a complex composed of PRKAR2B, GSK3B and GSKIP through GSKIP interaction; facilitates PKA-induced phosphorylation and regulates GSK3B activity. In terms of processing, phosphorylated by the activated catalytic chain. Four types of regulatory chains are found: I-alpha, I-beta, II-alpha, and II-beta. Their expression varies among tissues and is in some cases constitutive and in others inducible. Brain. Present in a few pyramidal neurons and mostly in mossy fibers. Colocalizes with PJA2 in dentate granule cells and at postsynaptic sites of primary hippocampal neurons.

It localises to the cytoplasm. The protein localises to the cell membrane. Functionally, regulatory subunit of the cAMP-dependent protein kinases involved in cAMP signaling in cells. Type II regulatory chains mediate membrane association by binding to anchoring proteins, including the MAP2 kinase. This is cAMP-dependent protein kinase type II-beta regulatory subunit (Prkar2b) from Rattus norvegicus (Rat).